The following is a 309-amino-acid chain: D-alanine--D-alanine ligase (309 aa).

Residues 99–304 enclose the ATP-grasp domain; it reads KRVLLQAGIP…FPDLVQKIVD (206 aa). 132–187 serves as a coordination point for ATP; that stretch reads LKELGLPVVIKAPTQGSTIGTFIVREEGELEPAIAGALKYDLSFMAEAYLAGPEIT. Mg(2+)-binding residues include D258, E271, and N273.

The protein belongs to the D-alanine--D-alanine ligase family. Mg(2+) serves as cofactor. The cofactor is Mn(2+).

It is found in the cytoplasm. It carries out the reaction 2 D-alanine + ATP = D-alanyl-D-alanine + ADP + phosphate + H(+). It functions in the pathway cell wall biogenesis; peptidoglycan biosynthesis. Functionally, cell wall formation. In Moorella thermoacetica (strain ATCC 39073 / JCM 9320), this protein is D-alanine--D-alanine ligase.